The following is a 426-amino-acid chain: Zinc finger CCCH domain-containing protein 15 (426 aa).

Residues Met-1–Ser-12 are compositionally biased toward low complexity. Disordered stretches follow at residues Met-1–Gly-30 and Gly-53–Lys-74. The segment covering Lys-13 to Phe-29 has biased composition (basic and acidic residues). The segment covering Gly-53–Gln-62 has biased composition (polar residues). Residues Ala-61–Lys-86 adopt a coiled-coil conformation. Positions Glu-64–Lys-74 are enriched in basic and acidic residues. 2 consecutive C3H1-type zinc fingers follow at residues Asp-99–Thr-126 and Pro-174–Pro-212. A coiled-coil region spans residues Lys-218–Lys-285. Position 231 is a phosphoserine (Ser-231). The tract at residues Ile-236 to Lys-260 is required for interaction with DRG1. A disordered region spans residues Pro-299 to Ser-326. 3 positions are modified to phosphoserine: Ser-351, Ser-360, and Ser-381. Residues Tyr-358–Asp-411 form a disordered region.

This sequence belongs to the ZC3H15/TMA46 family. Interacts with DRG1; this interaction prevents DRG1 poly-ubiquitination and degradation by proteasome. DRG1-ZC3H15/DFRP1 complex co-sediments with polysomes. Associates with microtubules.

Its subcellular location is the cytoplasm. It is found in the nucleus. In terms of biological role, protects DRG1 from proteolytic degradation. Stimulates DRG1 GTPase activity likely by increasing the affinity for the potassium ions. The polypeptide is Zinc finger CCCH domain-containing protein 15 (ZC3H15) (Homo sapiens (Human)).